A 145-amino-acid polypeptide reads, in one-letter code: Large ribosomal subunit protein bL19 (145 aa).

This sequence belongs to the bacterial ribosomal protein bL19 family.

Functionally, this protein is located at the 30S-50S ribosomal subunit interface and may play a role in the structure and function of the aminoacyl-tRNA binding site. This is Large ribosomal subunit protein bL19 from Brucella abortus (strain S19).